A 466-amino-acid chain; its full sequence is Muscarinic acetylcholine receptor M2 (466 aa).

Over 1–22 the chain is Extracellular; it reads MNNSTNSSNNGLAITSPYKTFE. N2, N3, and N6 each carry an N-linked (GlcNAc...) asparagine glycan. The helical transmembrane segment at 23-45 threads the bilayer; it reads VVFIVLVAGSLSLVTIIGNILVM. At 46–59 the chain is on the cytoplasmic side; sequence VSIKVNRHLQTVNN. The chain crosses the membrane as a helical span at residues 60–80; the sequence is YFLFSLACADLIIGVFSMNLY. Residues 81–97 lie on the Extracellular side of the membrane; it reads TLYTVIGYWPLGPVVCD. C96 and C176 are joined by a disulfide. The chain crosses the membrane as a helical span at residues 98–119; sequence LWLALDYVVSNASVMNLLIISF. Residues 120-122 carry the Important for signaling motif; the sequence is DRY. Residues 120–139 lie on the Cytoplasmic side of the membrane; sequence DRYFCVTKPLTYPVKRTTKM. The helical transmembrane segment at 140 to 162 threads the bilayer; the sequence is AGMMIAAAWVLSFILWAPAILFW. At 163-184 the chain is on the extracellular side; it reads QFIVGVRTVEDGECYIQFFSNA. The helical transmembrane segment at 185 to 209 threads the bilayer; that stretch reads AVTFGTAIAAFYLPVIIMTVLYWHI. At 210–387 the chain is on the cytoplasmic side; sequence SRASKSRIKK…PPSREKKVTR (178 aa). The interval 218-320 is disordered; that stretch reads KKEKKEPVAN…SLGHSKDDNS (103 aa). Position 232 is a phosphoserine (S232). Positions 254-270 are enriched in basic and acidic residues; that stretch reads GLEHNKIQNGKAPRDGG. Composition is skewed to polar residues over residues 284-293 and 304-313; these read NDSTSVSAVA and DENTVSTSLG. Residues 388-410 traverse the membrane as a helical segment; the sequence is TILAILLAFIITWAPYNVMVLIN. Over 411-418 the chain is Extracellular; sequence TFCAPCIP. A disulfide bridge links C413 with C416. Residues 419-442 form a helical membrane-spanning segment; sequence NTVWTIGYWLCYINSTINPACYAL. Positions 436-440 match the Important for signaling motif; the sequence is NPACY. Residues 443–466 are Cytoplasmic-facing; the sequence is CNATFKKTFKHLLMCHYKNIGATR. A phosphothreonine mark is found at T446, T450, and T465.

It belongs to the G-protein coupled receptor 1 family. Muscarinic acetylcholine receptor subfamily. CHRM2 sub-subfamily. In terms of assembly, interacts with ARRB1 and ARRB2. Interacts with RACK1; the interaction regulates CHRM2 internalization. Phosphorylated in response to agonist treatment.

It is found in the cell membrane. The protein localises to the postsynaptic cell membrane. Functionally, the muscarinic acetylcholine receptor mediates various cellular responses, including inhibition of adenylate cyclase, breakdown of phosphoinositides and modulation of potassium channels through the action of G proteins. Primary transducing effect is adenylate cyclase inhibition. Signaling promotes phospholipase C activity, leading to the release of inositol trisphosphate (IP3); this then triggers calcium ion release into the cytosol. The chain is Muscarinic acetylcholine receptor M2 (Chrm2) from Mus musculus (Mouse).